Reading from the N-terminus, the 156-residue chain is Small ribosomal subunit protein uS7 (156 aa).

Belongs to the universal ribosomal protein uS7 family. In terms of assembly, part of the 30S ribosomal subunit. Contacts proteins S9 and S11.

Functionally, one of the primary rRNA binding proteins, it binds directly to 16S rRNA where it nucleates assembly of the head domain of the 30S subunit. Is located at the subunit interface close to the decoding center, probably blocks exit of the E-site tRNA. This is Small ribosomal subunit protein uS7 from Edwardsiella ictaluri (strain 93-146).